The following is a 1226-amino-acid chain: DNA-directed RNA polymerase subunit beta (1226 aa).

The protein belongs to the RNA polymerase beta chain family. The RNAP catalytic core consists of 2 alpha, 1 beta, 1 beta' and 1 omega subunit. When a sigma factor is associated with the core the holoenzyme is formed, which can initiate transcription.

It carries out the reaction RNA(n) + a ribonucleoside 5'-triphosphate = RNA(n+1) + diphosphate. Its function is as follows. DNA-dependent RNA polymerase catalyzes the transcription of DNA into RNA using the four ribonucleoside triphosphates as substrates. This is DNA-directed RNA polymerase subunit beta from Leptospira interrogans serogroup Icterohaemorrhagiae serovar copenhageni (strain Fiocruz L1-130).